A 1867-amino-acid chain; its full sequence is Probable serine/threonine-protein kinase roco8 (1867 aa).

A DEP 1 domain is found at 16 to 93 (SSDGLQIKDR…DDYIFYQFDN (78 aa)). Disordered regions lie at residues 96–115 (NNNNINNNNNNATSTATTAT) and 121–225 (VSTK…NSFN). Over residues 121–223 (VSTKIGSIGK…NSNSTYNSNS (103 aa)) the composition is skewed to low complexity. The DEP 2 domain occupies 264–342 (GDKGLKLQKK…NNNNGGGGVM (79 aa)). LRR repeat units lie at residues 491 to 512 (RLDDLCLTHKCISIIPTTIINT), 515 to 536 (FLRIIDLSFNQLSESNQLESIA), 540 to 561 (NLESCNLSHNQLSTLPSSFSRL), 563 to 584 (LLTKLILSHNCFQVIPNVVFQL), 586 to 607 (NLEELSLAANQLSSISESIGSL), 609 to 631 (SLEKLDLSFNKQINKIPKELGLL), 633 to 656 (RLKSLNVLGSNKINELPSFLSTLP), and 657 to 678 (LLEQLDFSRDIIKSPPKEITSK). Residues 693–941 (GTETLSHIKL…NEIIQTLLNQ (249 aa)) form the Roc domain. Disordered stretches follow at residues 763 to 813 (QNGI…KKRP) and 942 to 961 (SNNNNNNNNNNNYNNNKQSN). Low complexity predominate over residues 768–793 (TSSSNLNLSTGTLPPPTQLSSSTSEL). Residues 974 to 1111 (PSIYITLETN…ILYTLKNNSN (138 aa)) form the COR domain. The tract at residues 1163–1207 (SPSLSLSNSSQSVFTNPNNNNNNKSEQQQQQQQQQQQPQPISTSP) is disordered. The 409-residue stretch at 1456-1864 (LIYQEEIGVG…TLNEIKDSTI (409 aa)) folds into the Protein kinase domain. ATP is bound by residues 1462–1470 (IGVGGFSRV) and K1483. Residues 1509-1546 (SNSSLSISLSSSTSSLSPPIVNNNNNNNNLNNNLNNLN) form a disordered region. D1721 serves as the catalytic Proton acceptor.

The protein belongs to the protein kinase superfamily. TKL Ser/Thr protein kinase family. ROCO subfamily.

The catalysed reaction is L-seryl-[protein] + ATP = O-phospho-L-seryl-[protein] + ADP + H(+). The enzyme catalyses L-threonyl-[protein] + ATP = O-phospho-L-threonyl-[protein] + ADP + H(+). This is Probable serine/threonine-protein kinase roco8 (roco8) from Dictyostelium discoideum (Social amoeba).